The sequence spans 93 residues: Cell division protein FtsB (93 aa).

Residues 1-3 (MRV) lie on the Cytoplasmic side of the membrane. Residues 4–21 (TLVVLLALFLALQYRLWF) form a helical membrane-spanning segment. Topologically, residues 22-93 (GKNSLPDYWR…FFRLVPDRNP (72 aa)) are periplasmic. A coiled-coil region spans residues 28-75 (DYWRLQQEVSNQKNTNENLERRNQLIYADIEDLREGEDALEERARNEL).

The protein belongs to the FtsB family. Part of a complex composed of FtsB, FtsL and FtsQ.

The protein localises to the cell inner membrane. Its function is as follows. Essential cell division protein. May link together the upstream cell division proteins, which are predominantly cytoplasmic, with the downstream cell division proteins, which are predominantly periplasmic. This is Cell division protein FtsB from Idiomarina loihiensis (strain ATCC BAA-735 / DSM 15497 / L2-TR).